Here is a 196-residue protein sequence, read N- to C-terminus: Nucleoside triphosphate pyrophosphatase (196 aa).

Catalysis depends on Asp-73, which acts as the Proton acceptor.

This sequence belongs to the Maf family. It depends on a divalent metal cation as a cofactor.

The protein resides in the cytoplasm. It catalyses the reaction a ribonucleoside 5'-triphosphate + H2O = a ribonucleoside 5'-phosphate + diphosphate + H(+). The catalysed reaction is a 2'-deoxyribonucleoside 5'-triphosphate + H2O = a 2'-deoxyribonucleoside 5'-phosphate + diphosphate + H(+). Its function is as follows. Nucleoside triphosphate pyrophosphatase. May have a dual role in cell division arrest and in preventing the incorporation of modified nucleotides into cellular nucleic acids. The sequence is that of Nucleoside triphosphate pyrophosphatase from Anaplasma marginale (strain Florida).